A 2629-amino-acid polypeptide reads, in one-letter code: Protein DOP1 homolog (2629 aa).

Disordered regions lie at residues asparagine 561–asparagine 584, serine 605–serine 652, alanine 688–tyrosine 710, methionine 1278–alanine 1340, threonine 1371–histidine 1395, isoleucine 1435–serine 1471, and arginine 1766–arginine 1785. Polar residues-rich tracts occupy residues serine 605–serine 615 and alanine 636–leucine 647. Positions aspartate 1307–aspartate 1320 are enriched in acidic residues. Basic and acidic residues predominate over residues serine 1321–serine 1333. 2 stretches are compositionally biased toward polar residues: residues glycine 1381–aspartate 1391 and isoleucine 1435–glutamine 1450.

This sequence belongs to the DOP1 family.

It is found in the golgi apparatus membrane. In terms of biological role, may be involved in protein traffic between late Golgi and early endosomes. The protein is Protein DOP1 homolog of Drosophila pseudoobscura pseudoobscura (Fruit fly).